Consider the following 215-residue polypeptide: Ankyrin repeat domain-containing protein 49 (215 aa).

2 ANK repeats span residues 81 to 110 and 114 to 143; these read DGYT…NPNA and LGWT…DVNA.

As to quaternary structure, interacts with Bdbt; interaction promotes the stability of both complex members.

Its subcellular location is the cytoplasm. The protein resides in the cytosol. The protein localises to the cell membrane. Functionally, required for regulating the establishment of planar cell polarity in the wing. Forms a complex with Bdbt which likely functions in the regulation of planar polarity by promoting the activity of Dco during planar polarity establishment. Within the complex, probably functions to stabilize Bdbt, while Bdbt directly promotes Dco activity in regulating phosphorylation of core proteins such as dsh, and asymmetric localization. This Drosophila melanogaster (Fruit fly) protein is Ankyrin repeat domain-containing protein 49.